Consider the following 73-residue polypeptide: Tetrahydromethanopterin S-methyltransferase subunit G (73 aa).

The helical transmembrane segment at 48 to 68 (IGILYGAVVGLLLFLIYVSVS) threads the bilayer.

This sequence belongs to the MtrG family. The complex is composed of 8 subunits; MtrA, MtrB, MtrC, MtrD, MtrE, MtrF, MtrG and MtrH.

It is found in the cell membrane. It carries out the reaction 5-methyl-5,6,7,8-tetrahydromethanopterin + coenzyme M + 2 Na(+)(in) = 5,6,7,8-tetrahydromethanopterin + methyl-coenzyme M + 2 Na(+)(out). It functions in the pathway one-carbon metabolism; methanogenesis from CO(2); methyl-coenzyme M from 5,10-methylene-5,6,7,8-tetrahydromethanopterin: step 2/2. Part of a complex that catalyzes the formation of methyl-coenzyme M and tetrahydromethanopterin from coenzyme M and methyl-tetrahydromethanopterin. This is an energy-conserving, sodium-ion translocating step. This chain is Tetrahydromethanopterin S-methyltransferase subunit G, found in Methanosarcina acetivorans (strain ATCC 35395 / DSM 2834 / JCM 12185 / C2A).